The primary structure comprises 130 residues: Small ribosomal subunit protein uS8 (130 aa).

The protein belongs to the universal ribosomal protein uS8 family. In terms of assembly, part of the 30S ribosomal subunit. Contacts proteins S5 and S12.

One of the primary rRNA binding proteins, it binds directly to 16S rRNA central domain where it helps coordinate assembly of the platform of the 30S subunit. The sequence is that of Small ribosomal subunit protein uS8 from Phytoplasma mali (strain AT).